Reading from the N-terminus, the 385-residue chain is Effector protein hopAB3 (385 aa).

Disordered stretches follow at residues 1-61 (MVGI…AGRP), 73-139 (TREW…SPLY), and 215-293 (ADSQ…PRIN). Positions 1–333 (MVGISGRAGP…INMEDLRAAL (333 aa)) are host recognition. Over residues 217–234 (SQQAARAPARTPPRSSVR) the composition is skewed to low complexity. Polar residues-rich tracts occupy residues 245-256 (ATESSSGSNQRS) and 265-283 (MTSN…TSQR).

It belongs to the HopAB family. As to quaternary structure, interacts physically with plant cell Pto.

Its subcellular location is the secreted. Functionally, effector protein involved in gene-for-gene resistance in tomato plants. It is recognized by the host Pto resistance protein and elicits Pto and Prf-dependent hypersensitive response (HR) and programmed cell death (PCD), resulting in host immunity. In susceptible plants, promotes virulence, in part, by enhancing the development of disease symptoms and bacterial growth. The chain is Effector protein hopAB3 (hopAB3) from Pseudomonas syringae pv. maculicola.